The primary structure comprises 117 residues: Large ribosomal subunit protein bL20 (117 aa).

Belongs to the bacterial ribosomal protein bL20 family.

Functionally, binds directly to 23S ribosomal RNA and is necessary for the in vitro assembly process of the 50S ribosomal subunit. It is not involved in the protein synthesizing functions of that subunit. In Campylobacter jejuni subsp. jejuni serotype O:2 (strain ATCC 700819 / NCTC 11168), this protein is Large ribosomal subunit protein bL20.